Here is a 120-residue protein sequence, read N- to C-terminus: MTRVKNSVVARARHKKILKQAAGYYGARSRTYRVAYQSVIKSGQYSYRDRRQKKRLFRRLWINRINAASRKYGMSYNHLINGLQKCNVCINRKMLADIAIFDRETFSALIDKAKINCEHT.

The protein belongs to the bacterial ribosomal protein bL20 family.

In terms of biological role, binds directly to 23S ribosomal RNA and is necessary for the in vitro assembly process of the 50S ribosomal subunit. It is not involved in the protein synthesizing functions of that subunit. This is Large ribosomal subunit protein bL20 from Blochmanniella pennsylvanica (strain BPEN).